The following is a 672-amino-acid chain: Threonine--tRNA ligase (672 aa).

In terms of domain architecture, TGS spans 2–60; sequence SEPKNILLTVDGELREVTHGTTGLDLFREKPTTAVMRVDGLLWDLAREIPAGASVESVD. A catalytic region spans residues 260-567; that stretch reads DHRKLGAELD…LTEHYAGAFP (308 aa). Zn(2+) contacts are provided by Cys366, His417, and His544.

This sequence belongs to the class-II aminoacyl-tRNA synthetase family. In terms of assembly, homodimer. Zn(2+) is required as a cofactor.

Its subcellular location is the cytoplasm. It carries out the reaction tRNA(Thr) + L-threonine + ATP = L-threonyl-tRNA(Thr) + AMP + diphosphate + H(+). Catalyzes the attachment of threonine to tRNA(Thr) in a two-step reaction: L-threonine is first activated by ATP to form Thr-AMP and then transferred to the acceptor end of tRNA(Thr). Also edits incorrectly charged L-seryl-tRNA(Thr). The polypeptide is Threonine--tRNA ligase (Micrococcus luteus (strain ATCC 4698 / DSM 20030 / JCM 1464 / CCM 169 / CCUG 5858 / IAM 1056 / NBRC 3333 / NCIMB 9278 / NCTC 2665 / VKM Ac-2230) (Micrococcus lysodeikticus)).